We begin with the raw amino-acid sequence, 316 residues long: HPr kinase/phosphorylase (316 aa).

Catalysis depends on residues histidine 141 and lysine 162. 156-163 (GESGVGKS) contributes to the ATP binding site. Mg(2+) is bound at residue serine 163. The active-site Proton acceptor; for phosphorylation activity. Proton donor; for dephosphorylation activity is the aspartate 180. The interval 204 to 213 (MEIRGIGIID) is important for the catalytic mechanism of both phosphorylation and dephosphorylation. Glutamate 205 is a binding site for Mg(2+). Arginine 246 is a catalytic residue. The tract at residues 267-272 (PVKVGR) is important for the catalytic mechanism of dephosphorylation.

The protein belongs to the HPrK/P family. As to quaternary structure, homohexamer. Requires Mg(2+) as cofactor.

It catalyses the reaction [HPr protein]-L-serine + ATP = [HPr protein]-O-phospho-L-serine + ADP + H(+). It carries out the reaction [HPr protein]-O-phospho-L-serine + phosphate + H(+) = [HPr protein]-L-serine + diphosphate. Catalyzes the ATP- as well as the pyrophosphate-dependent phosphorylation of a specific serine residue in HPr, a phosphocarrier protein of the phosphoenolpyruvate-dependent sugar phosphotransferase system (PTS). HprK/P also catalyzes the pyrophosphate-producing, inorganic phosphate-dependent dephosphorylation (phosphorolysis) of seryl-phosphorylated HPr (P-Ser-HPr). The two antagonistic activities of HprK/P are regulated by several intracellular metabolites, which change their concentration in response to the absence or presence of rapidly metabolisable carbon sources (glucose, fructose, etc.) in the growth medium. Therefore, by controlling the phosphorylation state of HPr, HPrK/P is a sensor enzyme that plays a major role in the regulation of carbon metabolism and sugar transport: it mediates carbon catabolite repression (CCR), and regulates PTS-catalyzed carbohydrate uptake and inducer exclusion. In Lactobacillus delbrueckii subsp. bulgaricus (strain ATCC 11842 / DSM 20081 / BCRC 10696 / JCM 1002 / NBRC 13953 / NCIMB 11778 / NCTC 12712 / WDCM 00102 / Lb 14), this protein is HPr kinase/phosphorylase.